Reading from the N-terminus, the 213-residue chain is RPW8-like protein 3 (213 aa).

The region spanning 1-153 is the RPW8 domain; the sequence is MPVSEIMAGA…ITRQPTDCIC (153 aa). A helical transmembrane segment spans residues 7–23; that stretch reads MAGAALGLALQVLHDAI. Coiled-coil stretches lie at residues 70–93 and 125–147; these read EDLK…RRRN and VDIK…ITRQ. An N-linked (GlcNAc...) asparagine glycan is attached at Asn-157.

This sequence belongs to the plant RPW8 protein family.

It is found in the membrane. Functionally, probable disease resistance (R) protein. The protein is RPW8-like protein 3 of Arabidopsis thaliana (Mouse-ear cress).